Consider the following 346-residue polypeptide: Large ribosomal subunit protein uL10 (346 aa).

The segment at 305–346 (EVPAAPAPEAKEEKKEEAEEEEEEKKEVSEEDLSAGLGALFG) is disordered. Positions 322–337 (AEEEEEEKKEVSEEDL) are enriched in acidic residues.

It belongs to the universal ribosomal protein uL10 family. Part of the 50S ribosomal subunit. Forms part of the ribosomal stalk which helps the ribosome interact with GTP-bound translation factors. Forms a heptameric L10(L12)2(L12)2(L12)2 complex, where L10 forms an elongated spine to which the L12 dimers bind in a sequential fashion.

Forms part of the ribosomal stalk, playing a central role in the interaction of the ribosome with GTP-bound translation factors. The protein is Large ribosomal subunit protein uL10 of Ignicoccus hospitalis (strain KIN4/I / DSM 18386 / JCM 14125).